The primary structure comprises 222 residues: Peptide methionine sulfoxide reductase MsrA (222 aa).

Residue Cys-60 is part of the active site.

The protein belongs to the MsrA Met sulfoxide reductase family.

The catalysed reaction is L-methionyl-[protein] + [thioredoxin]-disulfide + H2O = L-methionyl-(S)-S-oxide-[protein] + [thioredoxin]-dithiol. It carries out the reaction [thioredoxin]-disulfide + L-methionine + H2O = L-methionine (S)-S-oxide + [thioredoxin]-dithiol. In terms of biological role, has an important function as a repair enzyme for proteins that have been inactivated by oxidation. Catalyzes the reversible oxidation-reduction of methionine sulfoxide in proteins to methionine. This is Peptide methionine sulfoxide reductase MsrA from Pseudomonas putida (strain W619).